A 767-amino-acid polypeptide reads, in one-letter code: Protein transport protein Sec23A (767 aa).

Cys-61, Cys-66, Cys-85, and Cys-88 together coordinate Zn(2+). The Gelsolin-like repeat unit spans residues 634 to 720; that stretch reads PEPVLLDSSS…EHGGSQARFL (87 aa).

It belongs to the SEC23/SEC24 family. SEC23 subfamily. In terms of assembly, COPII is composed of at least five proteins: the Sec23/24 complex, the Sec13/31 complex and Sar1.

The protein resides in the cytoplasmic vesicle. It is found in the COPII-coated vesicle membrane. It localises to the endoplasmic reticulum membrane. Its subcellular location is the cytoplasm. The protein localises to the cytosol. Its function is as follows. Component of the coat protein complex II (COPII) which promotes the formation of transport vesicles from the endoplasmic reticulum (ER). The coat has two main functions, the physical deformation of the endoplasmic reticulum membrane into vesicles and the selection of cargo molecules for their transport to the Golgi complex. This Gallus gallus (Chicken) protein is Protein transport protein Sec23A.